Here is a 219-residue protein sequence, read N- to C-terminus: Envelope protein US9 homolog (219 aa).

The Intravirion segment spans residues 1–193; sequence MEKAEAAAVV…RHRRRRVALT (193 aa). Positions 145-146 match the Di-leucine internalization motif motif; the sequence is LL. Residues 153-168 are acidic; that stretch reads DYDSESGCYYSESDNE. Ser-163 and Ser-165 each carry phosphoserine; by host CK2. The helical; Signal-anchor for type II membrane protein transmembrane segment at 194-214 threads the bilayer; it reads VAGVILVVVLCAISGIVGAFL. The Virion surface segment spans residues 215 to 219; it reads ARVFP.

This sequence belongs to the alphaherpesvirinae envelope protein US9 family. In terms of processing, phosphorylated on serines within the acidic cluster. Phosphorylation determines whether endocytosed viral US9 traffics to the trans-Golgi network or recycles to the cell membrane.

The protein localises to the virion membrane. It is found in the host Golgi apparatus membrane. It localises to the host smooth endoplasmic reticulum membrane. Its subcellular location is the host cell membrane. Its function is as follows. Essential for the anterograde spread of the infection throughout the host nervous system. Together with the gE/gI heterodimer, US9 is involved in the sorting and transport of viral structural components toward axon tips. This Equine herpesvirus 1 (strain Kentucky A) (EHV-1) protein is Envelope protein US9 homolog.